Reading from the N-terminus, the 219-residue chain is MAKIQRVTEANLPTEFGMFRIVGFEFPDTKKEHVALVLGEVENTDEPILARIHSECLTGDALYSLKCDCGFQLAAALRQISQEGRGVLIYHREEGRGIGLINKIRAYSLQDKGMDTIEANLALGFAADERNFEVCADIFALLGINKVRLLTNNPNKIDTMKKAGINIVERVALNVGENRYNTEYLDTKAKKMGHFIIHNQQKYPLECPYCSEEVPVQEK.

Residue 51-55 (RIHSE) participates in GTP binding. Residues Cys56, Cys67, and Cys69 each contribute to the Zn(2+) site. GTP-binding positions include Gln72, 94 to 96 (EGR), and Thr116. Asp128 serves as the catalytic Proton acceptor. The Nucleophile role is filled by Arg130. Residues Thr151 and Lys156 each contribute to the GTP site.

The protein belongs to the GTP cyclohydrolase II family. It depends on Zn(2+) as a cofactor.

The enzyme catalyses GTP + 4 H2O = 2,5-diamino-6-hydroxy-4-(5-phosphoribosylamino)-pyrimidine + formate + 2 phosphate + 3 H(+). It functions in the pathway cofactor biosynthesis; riboflavin biosynthesis; 5-amino-6-(D-ribitylamino)uracil from GTP: step 1/4. Its function is as follows. Catalyzes the conversion of GTP to 2,5-diamino-6-ribosylamino-4(3H)-pyrimidinone 5'-phosphate (DARP), formate and pyrophosphate. The chain is GTP cyclohydrolase-2 from Pasteurella multocida (strain Pm70).